The sequence spans 392 residues: Queuine tRNA-ribosyltransferase (392 aa).

The active-site Proton acceptor is the D92. Residues 92–96 (DSGGF), D146, Q188, and G215 contribute to the substrate site. Positions 246–252 (GVGSPED) are RNA binding. The active-site Nucleophile is the D265. The RNA binding; important for wobble base 34 recognition stretch occupies residues 270-274 (TRLGR). C303, C305, C308, and H334 together coordinate Zn(2+).

Belongs to the queuine tRNA-ribosyltransferase family. As to quaternary structure, homodimer. Within each dimer, one monomer is responsible for RNA recognition and catalysis, while the other monomer binds to the replacement base PreQ1. Zn(2+) is required as a cofactor.

The catalysed reaction is 7-aminomethyl-7-carbaguanine + guanosine(34) in tRNA = 7-aminomethyl-7-carbaguanosine(34) in tRNA + guanine. It functions in the pathway tRNA modification; tRNA-queuosine biosynthesis. Functionally, catalyzes the base-exchange of a guanine (G) residue with the queuine precursor 7-aminomethyl-7-deazaguanine (PreQ1) at position 34 (anticodon wobble position) in tRNAs with GU(N) anticodons (tRNA-Asp, -Asn, -His and -Tyr). Catalysis occurs through a double-displacement mechanism. The nucleophile active site attacks the C1' of nucleotide 34 to detach the guanine base from the RNA, forming a covalent enzyme-RNA intermediate. The proton acceptor active site deprotonates the incoming PreQ1, allowing a nucleophilic attack on the C1' of the ribose to form the product. After dissociation, two additional enzymatic reactions on the tRNA convert PreQ1 to queuine (Q), resulting in the hypermodified nucleoside queuosine (7-(((4,5-cis-dihydroxy-2-cyclopenten-1-yl)amino)methyl)-7-deazaguanosine). This chain is Queuine tRNA-ribosyltransferase, found in Herpetosiphon aurantiacus (strain ATCC 23779 / DSM 785 / 114-95).